The chain runs to 948 residues: Hexagonally packed intermediate-layer surface protein (948 aa).

The first 17 residues, 1–17 (MKKNIALMALTGILTLA), serve as a signal peptide directing secretion. 2 cysteine pairs are disulfide-bonded: Cys168/Cys187 and Cys554/Cys666.

Glycosylated. Contains tightly bound reducing sugars (six per polypeptide chain) and fatty acids (covalently bound and located in the N-terminal region).

Its subcellular location is the secreted. The protein resides in the cell wall. It localises to the S-layer. In terms of biological role, shape maintenance, possible protection from noxious enzymes or exogenous and unsettling DNA, and may mediate homotypic cell-cell contacts. This is Hexagonally packed intermediate-layer surface protein (hpi) from Deinococcus radiodurans (strain ATCC 13939 / DSM 20539 / JCM 16871 / CCUG 27074 / LMG 4051 / NBRC 15346 / NCIMB 9279 / VKM B-1422 / R1).